A 90-amino-acid polypeptide reads, in one-letter code: Small ribosomal subunit protein bS20 (90 aa).

Belongs to the bacterial ribosomal protein bS20 family.

In terms of biological role, binds directly to 16S ribosomal RNA. This is Small ribosomal subunit protein bS20 from Roseiflexus sp. (strain RS-1).